The sequence spans 227 residues: ATP-dependent dethiobiotin synthetase BioD (227 aa).

13–18 provides a ligand contact to ATP; sequence DIGKTY. T17 is a Mg(2+) binding site. The active site involves K38. S42 is a substrate binding site. ATP is bound by residues D55, 116–119, and 179–180; these read EGSG and NN. Mg(2+) contacts are provided by D55 and E116.

Belongs to the dethiobiotin synthetase family. As to quaternary structure, homodimer. Requires Mg(2+) as cofactor.

Its subcellular location is the cytoplasm. The catalysed reaction is (7R,8S)-7,8-diammoniononanoate + CO2 + ATP = (4R,5S)-dethiobiotin + ADP + phosphate + 3 H(+). It functions in the pathway cofactor biosynthesis; biotin biosynthesis; biotin from 7,8-diaminononanoate: step 1/2. Functionally, catalyzes a mechanistically unusual reaction, the ATP-dependent insertion of CO2 between the N7 and N8 nitrogen atoms of 7,8-diaminopelargonic acid (DAPA, also called 7,8-diammoniononanoate) to form a ureido ring. The chain is ATP-dependent dethiobiotin synthetase BioD from Clostridium botulinum (strain Okra / Type B1).